The sequence spans 617 residues: Vacuolar protein sorting-associated protein 33A (617 aa).

A disordered region spans residues 268–287 (NFPSDGALPGGGGSGPRVEE).

Belongs to the STXBP/unc-18/SEC1 family. Component of the class C core vacuole/endosome tethering (CORVET) complex composed of at least Vps8, dor/Vps18, car/Vps33A and Vps16A; unlike in other species, Vps11 is not part of the Drosophila complex. Due to the reduced number of components the Drosophila CORVET complex is often referred to as the miniCORVET complex. Interacts with ema. Component of the homotypic fusion and vacuole protein sorting (HOPS) complex, composed of Vps16A, car/Vps33A, dor/Vps18, Vps39, Vps11 and lt/Vps41. The tethering complex core made up of Vps16A, car/Vps33A and dor/Vps18 and shared by both HOPS and CORVET, preferentially associates with CORVET specific Vps8 over HOPS specific lt/Vps41. Interacts with Syx17 (via SNARE domain); the interaction requires Vps16A, may involve additional components of the HOPS complex and may promote assembly of the Syx17-Snap29-Vamp7 trans-SNARE complex.

Its subcellular location is the early endosome. The protein localises to the late endosome membrane. It localises to the lysosome membrane. In terms of biological role, core component of the class C core vacuole/endosome tethering (CORVET) and the homotypic fusion and vacuole protein sorting (HOPS) tethering complexes involved in endo-lysosomal vesicle trafficking and lysosome biogenesis. The CORVET complex facilitates docking and fusion of endosomal vesicles during endosome maturation, acts upstream of HOPS, but is not involved in autophagic flux. The CORVET complex may cooperate with the early endosomal tether Rbsn-5 to mediate endosomal fusion. The HOPS complex facilitates docking and fusion of lysosomes with late endosomes and several other types of vesicles. The HOPS complex is also involved in autophagy and crinophagy (the elimination of unused secretory granules through their fusion with lysosomes). The HOPS complex probably instigates autophagosome-lysosome fusion by binding autophagosome associated Syx17/syntaxin 17 and promoting assembly of the trans-SNARE complex. Independent of Syx17/syntaxin 17 HOPS is involved in biosynthetic transport to lysosomes and lysosome-related organelles such as eye-pigment granules. Required for endocytic degradation of boss/bride of sevenless and N/Notch in developing ommatidia. In Drosophila melanogaster (Fruit fly), this protein is Vacuolar protein sorting-associated protein 33A.